The chain runs to 178 residues: Large ribosomal subunit protein bL25 (178 aa).

It belongs to the bacterial ribosomal protein bL25 family. CTC subfamily. As to quaternary structure, part of the 50S ribosomal subunit; part of the 5S rRNA/L5/L18/L25 subcomplex. Contacts the 5S rRNA. Binds to the 5S rRNA independently of L5 and L18.

Its function is as follows. This is one of the proteins that binds to the 5S RNA in the ribosome where it forms part of the central protuberance. The polypeptide is Large ribosomal subunit protein bL25 (Helicobacter acinonychis (strain Sheeba)).